Reading from the N-terminus, the 30-residue chain is Hainantoxin F6-34.84 (30 aa).

2 disulfides stabilise this stretch: cysteine 2–cysteine 15 and cysteine 9–cysteine 24.

Belongs to the AVIT (prokineticin) family. Expressed by the venom gland.

It localises to the secreted. This chain is Hainantoxin F6-34.84, found in Cyriopagopus hainanus (Chinese bird spider).